A 66-amino-acid chain; its full sequence is Large ribosomal subunit protein uL29 (66 aa).

This sequence belongs to the universal ribosomal protein uL29 family.

The protein is Large ribosomal subunit protein uL29 of Rhizobium meliloti (strain 1021) (Ensifer meliloti).